A 273-amino-acid chain; its full sequence is Undecaprenyl-diphosphatase (273 aa).

7 helical membrane passes run 6-26 (SLLI…LPVS), 45-65 (AKTF…VMFW), 90-110 (LTLI…LVFH), 116-136 (LFNP…LIAA), 190-210 (YAAS…ATVL), 222-242 (ADIP…LIAI), and 252-272 (ISFI…YVVF).

This sequence belongs to the UppP family.

It is found in the cell inner membrane. It catalyses the reaction di-trans,octa-cis-undecaprenyl diphosphate + H2O = di-trans,octa-cis-undecaprenyl phosphate + phosphate + H(+). In terms of biological role, catalyzes the dephosphorylation of undecaprenyl diphosphate (UPP). Confers resistance to bacitracin. This chain is Undecaprenyl-diphosphatase, found in Salmonella heidelberg (strain SL476).